A 390-amino-acid chain; its full sequence is Chalcone synthase (390 aa).

Cys-164 is a catalytic residue.

Belongs to the thiolase-like superfamily. Chalcone/stilbene synthases family.

It catalyses the reaction (E)-4-coumaroyl-CoA + 3 malonyl-CoA + 3 H(+) = 2',4,4',6'-tetrahydroxychalcone + 3 CO2 + 4 CoA. Its pathway is secondary metabolite biosynthesis; flavonoid biosynthesis. In terms of biological role, the primary product of this enzyme is 4,2',4',6'-tetrahydroxychalcone (also termed naringenin-chalcone or chalcone) which can under specific conditions spontaneously isomerize into naringenin. The polypeptide is Chalcone synthase (CHS) (Antirrhinum majus (Garden snapdragon)).